The following is a 242-amino-acid chain: RxLR effector protein PexRD15 (242 aa).

Residues 1 to 24 form the signal peptide; the sequence is MMKSLYAVNLVLLLLLAFFAPAPA. Positions 48-66 match the RxLR-dEER motif; it reads RLLRAHSSDKEEQKEEEER.

This sequence belongs to the RxLR effector family.

The protein localises to the secreted. Its subcellular location is the host cell membrane. Effector that enhances P.infestans colonization of Nicotiana benthamiana leaves. The polypeptide is RxLR effector protein PexRD15 (Phytophthora infestans (strain T30-4) (Potato late blight agent)).